The following is a 485-amino-acid chain: WD repeat-containing protein 13 (485 aa).

The residue at position 1 (Met1) is an N-acetylmethionine. 3 positions are modified to phosphoserine: Ser70, Ser74, and Ser79. Asymmetric dimethylarginine; alternate is present on Arg114. Arg114 is subject to Omega-N-methylarginine; alternate. 7 WD repeats span residues 162–202 (GMYH…LCQL), 208–246 (TVLRVLRGHTRGVSDFAWSLSNDILVSTSLDATMRIWAS), 250–290 (RCIR…VMNI), 295–335 (KVKG…LFDM), 341–389 (TKAK…VVDN), 394–438 (QLKR…FFDV), and 444–482 (AAVNKLQGHSAPVLDVSFNCDESLLASSDASGMVIVWRR).

As to expression, widely expressed.

It is found in the nucleus. This chain is WD repeat-containing protein 13 (WDR13), found in Homo sapiens (Human).